Consider the following 233-residue polypeptide: 3-dehydroquinate dehydratase (233 aa).

3-dehydroquinate-binding positions include 34-36 (ELR) and Arg-64. Catalysis depends on His-118, which acts as the Proton donor/acceptor. The active-site Schiff-base intermediate with substrate is the Lys-145. Residues Arg-185, Ser-205, and Gln-209 each coordinate 3-dehydroquinate.

Belongs to the type-I 3-dehydroquinase family. In terms of assembly, homodimer.

The enzyme catalyses 3-dehydroquinate = 3-dehydroshikimate + H2O. It participates in metabolic intermediate biosynthesis; chorismate biosynthesis; chorismate from D-erythrose 4-phosphate and phosphoenolpyruvate: step 3/7. Its function is as follows. Involved in the third step of the chorismate pathway, which leads to the biosynthesis of aromatic amino acids. Catalyzes the cis-dehydration of 3-dehydroquinate (DHQ) and introduces the first double bond of the aromatic ring to yield 3-dehydroshikimate. The sequence is that of 3-dehydroquinate dehydratase from Coxiella burnetii (strain CbuK_Q154) (Coxiella burnetii (strain Q154)).